We begin with the raw amino-acid sequence, 115 residues long: uncharacterized protein (115 aa).

Residues 1-91 enclose the HTH arsR-type domain; sequence MTEYNANSIR…SELEGFKNVS (91 aa). A DNA-binding region (H-T-H motif) is located at residues 30–53; that stretch reads ASLISHTLLLSYATVLRHLRILND.

Functionally, essential for virus function. This is an uncharacterized protein from Saccharolobus solfataricus (Sulfolobus solfataricus).